The sequence spans 303 residues: UDP-N-acetylenolpyruvoylglucosamine reductase (303 aa).

Positions lysine 28–glycine 195 constitute an FAD-binding PCMH-type domain. The active site involves arginine 174. The Proton donor role is filled by serine 224. Residue glutamate 294 is part of the active site.

The protein belongs to the MurB family. FAD serves as cofactor.

The protein localises to the cytoplasm. The enzyme catalyses UDP-N-acetyl-alpha-D-muramate + NADP(+) = UDP-N-acetyl-3-O-(1-carboxyvinyl)-alpha-D-glucosamine + NADPH + H(+). It participates in cell wall biogenesis; peptidoglycan biosynthesis. Its function is as follows. Cell wall formation. This is UDP-N-acetylenolpyruvoylglucosamine reductase from Lactobacillus gasseri (strain ATCC 33323 / DSM 20243 / BCRC 14619 / CIP 102991 / JCM 1131 / KCTC 3163 / NCIMB 11718 / NCTC 13722 / AM63).